The sequence spans 411 residues: Dual-specificity RNA methyltransferase RlmN (411 aa).

The active-site Proton acceptor is Glu-124. Residues 130-379 (EEGRGTLCIS…IRTPRGRDIL (250 aa)) enclose the Radical SAM core domain. A disulfide bridge connects residues Cys-137 and Cys-382. [4Fe-4S] cluster-binding residues include Cys-144, Cys-148, and Cys-151. S-adenosyl-L-methionine contacts are provided by residues 208 to 209 (GE), Ser-240, 262 to 264 (SLH), and Asn-339. Catalysis depends on Cys-382, which acts as the S-methylcysteine intermediate.

The protein belongs to the radical SAM superfamily. RlmN family. [4Fe-4S] cluster is required as a cofactor.

It is found in the cytoplasm. The enzyme catalyses adenosine(2503) in 23S rRNA + 2 reduced [2Fe-2S]-[ferredoxin] + 2 S-adenosyl-L-methionine = 2-methyladenosine(2503) in 23S rRNA + 5'-deoxyadenosine + L-methionine + 2 oxidized [2Fe-2S]-[ferredoxin] + S-adenosyl-L-homocysteine. It catalyses the reaction adenosine(37) in tRNA + 2 reduced [2Fe-2S]-[ferredoxin] + 2 S-adenosyl-L-methionine = 2-methyladenosine(37) in tRNA + 5'-deoxyadenosine + L-methionine + 2 oxidized [2Fe-2S]-[ferredoxin] + S-adenosyl-L-homocysteine. Specifically methylates position 2 of adenine 2503 in 23S rRNA and position 2 of adenine 37 in tRNAs. m2A2503 modification seems to play a crucial role in the proofreading step occurring at the peptidyl transferase center and thus would serve to optimize ribosomal fidelity. The polypeptide is Dual-specificity RNA methyltransferase RlmN (Sinorhizobium fredii (strain NBRC 101917 / NGR234)).